Here is a 228-residue protein sequence, read N- to C-terminus: 2,3-bisphosphoglycerate-dependent phosphoglycerate mutase (228 aa).

Substrate-binding positions include Arg8 to Asn15, Thr21 to Gly22, Arg60, Glu87 to Tyr90, Lys98, Arg114 to Arg115, and Gly183 to Asn184. The active-site Tele-phosphohistidine intermediate is His9. Catalysis depends on Glu87, which acts as the Proton donor/acceptor.

It belongs to the phosphoglycerate mutase family. BPG-dependent PGAM subfamily.

The enzyme catalyses (2R)-2-phosphoglycerate = (2R)-3-phosphoglycerate. The protein operates within carbohydrate degradation; glycolysis; pyruvate from D-glyceraldehyde 3-phosphate: step 3/5. Its function is as follows. Catalyzes the interconversion of 2-phosphoglycerate and 3-phosphoglycerate. The protein is 2,3-bisphosphoglycerate-dependent phosphoglycerate mutase of Staphylococcus epidermidis (strain ATCC 35984 / DSM 28319 / BCRC 17069 / CCUG 31568 / BM 3577 / RP62A).